A 395-amino-acid chain; its full sequence is Carbohydrate sulfotransferase 6 (395 aa).

The Cytoplasmic portion of the chain corresponds to 1–5 (MWLPR). The helical; Signal-anchor for type II membrane protein transmembrane segment at 6–26 (VSSTAVTALLLAQTFLLLFLV) threads the bilayer. Residues 27–395 (SRPGPSSPAG…ASSTASHPRN (369 aa)) are Lumenal-facing. Position 49–55 (49–55 (WRSGSSF)) interacts with 3'-phosphoadenylyl sulfate. N-linked (GlcNAc...) asparagine glycosylation occurs at asparagine 116. Residue 202–210 (RDPRAVLRS) coordinates 3'-phosphoadenylyl sulfate. N-linked (GlcNAc...) asparagine glycans are attached at residues asparagine 229, asparagine 305, and asparagine 328.

It belongs to the sulfotransferase 1 family. Gal/GlcNAc/GalNAc subfamily. Expressed in cornea. Mainly expressed in brain. Also expressed in spinal cord and trachea.

Its subcellular location is the golgi apparatus membrane. It catalyses the reaction 3'-phosphoadenylyl sulfate + keratan = adenosine 3',5'-bisphosphate + keratan 6'-sulfate.. Sulfotransferase that utilizes 3'-phospho-5'-adenylyl sulfate (PAPS) as sulfonate donor to catalyze the transfer of sulfate to position 6 of non-reducing N-acetylglucosamine (GlcNAc) residues of keratan. Cooperates with B4GALT4 galactosyltransferase and B3GNT7 N-acetylglucosaminyltransferase to construct and elongate the sulfated disaccharide unit [-&gt;3Galbeta1-&gt;4(6-sulfoGlcNAcbeta)1-&gt;] within keratan sulfate polymer. Involved in biosynthesis of keratan sulfate in cornea, with an impact on proteoglycan fibril organization and corneal transparency. Involved in sulfation of endothelial mucins such as GLYCAM1. This Homo sapiens (Human) protein is Carbohydrate sulfotransferase 6.